The chain runs to 547 residues: Methionine--tRNA ligase (547 aa).

The short motif at proline 15 to histidine 25 is the 'HIGH' region element. The Zn(2+) site is built by cysteine 146, cysteine 149, cysteine 159, and cysteine 162. The short motif at lysine 332–serine 336 is the 'KMSKS' region element. Lysine 335 is an ATP binding site.

The protein belongs to the class-I aminoacyl-tRNA synthetase family. MetG type 1 subfamily. As to quaternary structure, monomer. Zn(2+) serves as cofactor.

The protein localises to the cytoplasm. The catalysed reaction is tRNA(Met) + L-methionine + ATP = L-methionyl-tRNA(Met) + AMP + diphosphate. Functionally, is required not only for elongation of protein synthesis but also for the initiation of all mRNA translation through initiator tRNA(fMet) aminoacylation. The protein is Methionine--tRNA ligase (metG) of Buchnera aphidicola subsp. Acyrthosiphon pisum (strain APS) (Acyrthosiphon pisum symbiotic bacterium).